The following is a 110-amino-acid chain: Phosphoribosyl-ATP pyrophosphatase (110 aa).

Belongs to the PRA-PH family.

Its subcellular location is the cytoplasm. It carries out the reaction 1-(5-phospho-beta-D-ribosyl)-ATP + H2O = 1-(5-phospho-beta-D-ribosyl)-5'-AMP + diphosphate + H(+). Its pathway is amino-acid biosynthesis; L-histidine biosynthesis; L-histidine from 5-phospho-alpha-D-ribose 1-diphosphate: step 2/9. This Pseudomonas fluorescens (strain ATCC BAA-477 / NRRL B-23932 / Pf-5) protein is Phosphoribosyl-ATP pyrophosphatase.